A 134-amino-acid polypeptide reads, in one-letter code: uncharacterized protein (134 aa).

The helical transmembrane segment at 110–130 (SLGVLTDILFLVLYSLLIHLS) threads the bilayer.

It localises to the membrane. This is an uncharacterized protein from Saccharomyces cerevisiae (strain ATCC 204508 / S288c) (Baker's yeast).